A 301-amino-acid chain; its full sequence is uncharacterized protein (301 aa).

The protein belongs to the asfivirus E301R family. As to quaternary structure, interacts with host IRF3.

Its function is as follows. Plays a role in the inhibition of host innate immune system by acting as a negatively regulator of type I interferon production. Mechanistically, interacts with and prevents host IRF3 nuclear localization to inhibit its transcriptional activity. This is an uncharacterized protein from African swine fever virus (isolate Pig/Kenya/KEN-50/1950) (ASFV).